Here is a 1481-residue protein sequence, read N- to C-terminus: ABC multidrug transporter atrH (1481 aa).

Over residues 1–10 the composition is skewed to basic and acidic residues; that stretch reads MALPREERSL. 2 disordered regions span residues 1–45 and 61–89; these read MALP…GIEQ and ISQT…SDQF. Residues N19, N76, and N320 are each glycosylated (N-linked (GlcNAc...) asparagine). One can recognise an ABC transporter 1 domain in the interval 134-396; that stretch reads ATVSNVWLKA…FIEMGFDCPE (263 aa). The helical transmembrane segment at 507-527 threads the bilayer; the sequence is MTLSTVIGNSILALIISSVFY. N530 carries an N-linked (GlcNAc...) asparagine glycan. The next 5 helical transmembrane spans lie at 542-562, 587-607, 616-636, 650-670, and 758-778; these read LLFF…LTLW, LIVD…ILYF, GHFF…SNVF, EVPA…TIPV, and FGIL…ASEL. The ABC transporter 2 domain occupies 838–1081; it reads FHWQDVCYDI…LIKYFEDKGS (244 aa). 874–881 is an ATP binding site; sequence GVTGAGKT. The next 6 helical transmembrane spans lie at 1174-1194, 1210-1230, 1249-1269, 1298-1318, 1327-1347, and 1358-1378; these read YIYA…FTFW, IFML…YFAM, AFML…AVPA, LLVL…IAGI, IAQL…SPDV, and ASPF…GAPV. N-linked (GlcNAc...) asparagine glycosylation is present at N1395. The chain crosses the membrane as a helical span at residues 1446 to 1466; it reads VGILFVYIVFNTVAAVFLYWL.

The protein belongs to the ABC transporter superfamily. ABCG family. PDR (TC 3.A.1.205) subfamily.

The protein resides in the cell membrane. Pleiotropic ABC efflux transporter involved in the basal level of azole susceptibility. The sequence is that of ABC multidrug transporter atrH from Aspergillus oryzae (strain ATCC 42149 / RIB 40) (Yellow koji mold).